The following is a 92-amino-acid chain: Small ribosomal subunit protein uS19 (92 aa).

The protein belongs to the universal ribosomal protein uS19 family.

Functionally, protein S19 forms a complex with S13 that binds strongly to the 16S ribosomal RNA. This chain is Small ribosomal subunit protein uS19, found in Nostoc sp. (strain PCC 7120 / SAG 25.82 / UTEX 2576).